The primary structure comprises 191 residues: A-type ATP synthase subunit E (191 aa).

This sequence belongs to the V-ATPase E subunit family. In terms of assembly, has multiple subunits with at least A(3), B(3), C, D, E, F, H, I and proteolipid K(x).

It is found in the cell membrane. Functionally, component of the A-type ATP synthase that produces ATP from ADP in the presence of a proton gradient across the membrane. This chain is A-type ATP synthase subunit E, found in Methanoregula boonei (strain DSM 21154 / JCM 14090 / 6A8).